The sequence spans 156 residues: Small ribosomal subunit protein uS7c (156 aa).

It belongs to the universal ribosomal protein uS7 family. As to quaternary structure, part of the 30S ribosomal subunit.

It localises to the plastid. Its subcellular location is the chloroplast. One of the primary rRNA binding proteins, it binds directly to 16S rRNA where it nucleates assembly of the head domain of the 30S subunit. This Bowenia serrulata (Byfield fern) protein is Small ribosomal subunit protein uS7c (rps7).